The chain runs to 468 residues: MAEAATEIPPTASNVTVFTFEEQATSSLALYGMSILCIIIGSIRSAQYIRTNIDKKRLIEGSITMREARKFPISASLVLFGLYLFFKPAAERFLWVARVFQILRVPEEYVQKINSTIISYTANTTTTGPSEPFLLRLASRIPQERVPEAIQNAATYAYTNLPTIQKAECMQLLTFLICFEGVNAFASLLKPFVTAFLKKMPLVPSFLRFNAPYLFSLKKGNKEMEEGDIEDAKKKETEYLFKIDFDRYDIIALLMCSPILISHLLKRHWITNNIIGVSFSILGIERLHLASFKAGSLLLVGLFFYDIFWVFGTDVMTSVAKGIDAPILLQFPQDIYRNGIMEASKHSMLGLGDIVIPGIFIALLRRFDYRVVQTTAESKAPQGSLKGRYYFVVTVVAYMAGLFITMAVMHHFKAAQPALLYLVPCCLFVPLLLAVIRGELSALWNYDESRHVDNEENRKKVDSGKKNN.

The Lumenal segment spans residues 1 to 22 (MAEAATEIPPTASNVTVFTFEE). A glycan (N-linked (GlcNAc...) asparagine) is linked at asparagine 14. Residues 23–43 (QATSSLALYGMSILCIIIGSI) form a helical membrane-spanning segment. The Cytoplasmic segment spans residues 44–70 (RSAQYIRTNIDKKRLIEGSITMREARK). Residues 71–91 (FPISASLVLFGLYLFFKPAAE) traverse the membrane as a helical segment. At 92–168 (RFLWVARVFQ…TNLPTIQKAE (77 aa)) the chain is on the lumenal side. 2 N-linked (GlcNAc...) asparagine glycosylation sites follow: asparagine 114 and asparagine 123. Residues 169–189 (CMQLLTFLICFEGVNAFASLL) form a helical membrane-spanning segment. Residues 190–247 (KPFVTAFLKKMPLVPSFLRFNAPYLFSLKKGNKEMEEGDIEDAKKKETEYLFKIDFDR) lie on the Cytoplasmic side of the membrane. Residues 248–265 (YDIIALLMCSPILISHLL) form a helical membrane-spanning segment. Over 266–267 (KR) the chain is Lumenal. Residues 268–284 (HWITNNIIGVSFSILGI) form a helical membrane-spanning segment. The Cytoplasmic segment spans residues 285–296 (ERLHLASFKAGS). The helical transmembrane segment at 297–317 (LLLVGLFFYDIFWVFGTDVMT) threads the bilayer. The active site involves aspartate 306. Residues 318 to 343 (SVAKGIDAPILLQFPQDIYRNGIMEA) lie on the Lumenal side of the membrane. A helical membrane pass occupies residues 344–364 (SKHSMLGLGDIVIPGIFIALL). The active site involves aspartate 353. Residues 365–388 (RRFDYRVVQTTAESKAPQGSLKGR) lie on the Cytoplasmic side of the membrane. Residues 389–409 (YYFVVTVVAYMAGLFITMAVM) traverse the membrane as a helical segment. The Lumenal portion of the chain corresponds to 410–415 (HHFKAA). The chain crosses the membrane as a helical span at residues 416-436 (QPALLYLVPCCLFVPLLLAVI). The short motif at 417–419 (PAL) is the PAL element. Residues 437–468 (RGELSALWNYDESRHVDNEENRKKVDSGKKNN) are Cytoplasmic-facing.

This sequence belongs to the peptidase A22B family.

Its subcellular location is the membrane. The protein localises to the endoplasmic reticulum membrane. Its function is as follows. Acts as intramembrane protease. In larvae, required for the complete shedding of the cuticle during molting, possibly by regulating cholesterol uptake via lrp-1. Involved in embryonic and larval development. This is Intramembrane protease 2 from Caenorhabditis elegans.